The primary structure comprises 633 residues: Molybdenum cofactor biosynthesis protein 1 (633 aa).

A molybdenum cofactor biosynthesis protein A region spans residues 1–380; it reads MAAQPVSRVV…QMKNRPMILI (380 aa). Ser-61 is subject to Phosphoserine. The Radical SAM core domain occupies 61 to 295; it reads SFGRHHSYLR…AKAFKIPGFR (235 aa). A GTP-binding site is contributed by Arg-70. Residues Cys-77 and Cys-81 each coordinate [4Fe-4S] cluster. Tyr-83 contacts S-adenosyl-L-methionine. Cys-84 is a binding site for [4Fe-4S] cluster. Arg-120 lines the GTP pocket. Gly-124 is a binding site for S-adenosyl-L-methionine. Thr-151 lines the GTP pocket. Residue Ser-175 participates in S-adenosyl-L-methionine binding. Position 195 is an N6-acetyllysine (Lys-195). Position 212 (Lys-212) interacts with GTP. Met-246 is a binding site for S-adenosyl-L-methionine. Positions 309 and 312 each coordinate [4Fe-4S] cluster. 314–316 lines the GTP pocket; that stretch reads RLR. Residue Cys-326 coordinates [4Fe-4S] cluster. Residues 410–633 are molybdenum cofactor biosynthesis protein C; sequence VSFSSQMVTL…GGQRGDFHRT (224 aa). A disordered region spans residues 446–480; the sequence is SSHLDSDANPKCLSPTEPQAPAASSGPLPDSDQLT. An N6-acetyllysine modification is found at Lys-525. The For molybdenum cofactor biosynthesis protein C activity role is filled by Asp-603.

This sequence in the C-terminal section; belongs to the MoaC family. The protein in the N-terminal section; belongs to the radical SAM superfamily. MoaA family. In terms of assembly, isoform MOCS1A and isoform MOCS1B probably form a heterooligomer. [4Fe-4S] cluster serves as cofactor.

It carries out the reaction GTP + AH2 + S-adenosyl-L-methionine = (8S)-3',8-cyclo-7,8-dihydroguanosine 5'-triphosphate + 5'-deoxyadenosine + L-methionine + A + H(+). It catalyses the reaction (8S)-3',8-cyclo-7,8-dihydroguanosine 5'-triphosphate = cyclic pyranopterin phosphate + diphosphate. Its pathway is cofactor biosynthesis; molybdopterin biosynthesis. In terms of biological role, isoform MOCS1A and isoform MOCS1B probably form a complex that catalyzes the conversion of 5'-GTP to cyclic pyranopterin monophosphate (cPMP). MOCS1A catalyzes the cyclization of GTP to (8S)-3',8-cyclo-7,8-dihydroguanosine 5'-triphosphate and MOCS1B catalyzes the subsequent conversion of (8S)-3',8-cyclo-7,8-dihydroguanosine 5'-triphosphate to cPMP. The polypeptide is Molybdenum cofactor biosynthesis protein 1 (MOCS1) (Bos taurus (Bovine)).